Reading from the N-terminus, the 91-residue chain is Signal peptidase complex subunit 1 (91 aa).

The Cytoplasmic segment spans residues 1–28 (MEIFNDLSRKLVFPIDYPSQRRVAKLTD). The chain crosses the membrane as a helical span at residues 29-48 (IILGSGTLVSCLLGFYAGSL). Residues 49–51 (SLT) are Lumenal-facing. A helical transmembrane segment spans residues 52 to 71 (LYAFAAAYGLALLLVVPAYG). At 72-91 (KYRQQKLAWVGSAAATTKDL) the chain is on the cytoplasmic side.

It belongs to the SPCS1 family. In terms of assembly, component of the signal peptidase complex (SPC) composed of a catalytic subunit SEC11 and three accessory subunits SPC1, SPC2 and SPC3. The complex induces a local thinning of the ER membrane which is used to measure the length of the signal peptide (SP) h-region of protein substrates. This ensures the selectivity of the complex towards h-regions shorter than 18-20 amino acids. SPC associates with the translocon complex.

It localises to the endoplasmic reticulum membrane. In terms of biological role, component of the signal peptidase complex (SPC) which catalyzes the cleavage of N-terminal signal sequences from nascent proteins as they are translocated into the lumen of the endoplasmic reticulum. Dispensable for SPC enzymatic activity. The protein is Signal peptidase complex subunit 1 (SPC1) of Eremothecium gossypii (strain ATCC 10895 / CBS 109.51 / FGSC 9923 / NRRL Y-1056) (Yeast).